Reading from the N-terminus, the 116-residue chain is Small ribosomal subunit protein bS18c (116 aa).

Residues 1-13 (MKPSFRNTSPSFR) are compositionally biased toward polar residues. The interval 1–51 (MKPSFRNTSPSFRNRSKPYFRNRSKPYFRNRSKPSFRNTSKRFSPNQQSFR) is disordered. The segment covering 14 to 34 (NRSKPYFRNRSKPYFRNRSKP) has biased composition (basic residues). The span at 35 to 49 (SFRNTSKRFSPNQQS) shows a compositional bias: polar residues.

The protein belongs to the bacterial ribosomal protein bS18 family. As to quaternary structure, part of the 30S ribosomal subunit.

The protein localises to the plastid. It is found in the chloroplast. In Cryptomeria japonica (Japanese cedar), this protein is Small ribosomal subunit protein bS18c.